The following is a 281-amino-acid chain: Aspartate/glutamate leucyltransferase (281 aa).

This sequence belongs to the R-transferase family. Bpt subfamily.

It localises to the cytoplasm. It catalyses the reaction N-terminal L-glutamyl-[protein] + L-leucyl-tRNA(Leu) = N-terminal L-leucyl-L-glutamyl-[protein] + tRNA(Leu) + H(+). The catalysed reaction is N-terminal L-aspartyl-[protein] + L-leucyl-tRNA(Leu) = N-terminal L-leucyl-L-aspartyl-[protein] + tRNA(Leu) + H(+). Functions in the N-end rule pathway of protein degradation where it conjugates Leu from its aminoacyl-tRNA to the N-termini of proteins containing an N-terminal aspartate or glutamate. In Paracoccus denitrificans (strain Pd 1222), this protein is Aspartate/glutamate leucyltransferase.